Here is a 354-residue protein sequence, read N- to C-terminus: Protein OPG055 (354 aa).

It belongs to the orthopoxvirus OPG055 family.

In terms of biological role, stimulates increases in peripheral microtubule dynamics and may increase the motility of the infected cells, contributing to cell-to-cell spread of the virus. Seems to inhibit the signaling via the GTPase RHOA and DIAPH1/mDia. In Cynomys gunnisoni (Gunnison's prairie dog), this protein is Protein OPG055 (OPG055).